Consider the following 657-residue polypeptide: Glycogen debranching enzyme (657 aa).

D336 acts as the Nucleophile in catalysis. The Proton donor role is filled by E371. Positions 460-479 (ANGEENRDGTNNNYSNNHGK) are disordered.

The protein belongs to the glycosyl hydrolase 13 family.

It carries out the reaction Hydrolysis of (1-&gt;6)-alpha-D-glucosidic linkages to branches with degrees of polymerization of three or four glucose residues in limit dextrin.. Its pathway is glycan degradation; glycogen degradation. Removes maltotriose and maltotetraose chains that are attached by 1,6-alpha-linkage to the limit dextrin main chain, generating a debranched limit dextrin. The polypeptide is Glycogen debranching enzyme (Escherichia coli O9:H4 (strain HS)).